The chain runs to 485 residues: Glycogen synthase (485 aa).

An ADP-alpha-D-glucose-binding site is contributed by K20.

The protein belongs to the glycosyltransferase 1 family. Bacterial/plant glycogen synthase subfamily.

The catalysed reaction is [(1-&gt;4)-alpha-D-glucosyl](n) + ADP-alpha-D-glucose = [(1-&gt;4)-alpha-D-glucosyl](n+1) + ADP + H(+). The protein operates within glycan biosynthesis; glycogen biosynthesis. Its function is as follows. Synthesizes alpha-1,4-glucan chains using ADP-glucose. The sequence is that of Glycogen synthase from Vibrio parahaemolyticus serotype O3:K6 (strain RIMD 2210633).